The chain runs to 454 residues: tRNA modification GTPase MnmE (454 aa).

(6S)-5-formyl-5,6,7,8-tetrahydrofolate contacts are provided by R23, E80, and K120. The 162-residue stretch at 216-377 (GMKVVIAGRP…LRDHLKQSMG (162 aa)) folds into the TrmE-type G domain. Position 226 (N226) interacts with K(+). Residues 226-231 (NAGKSS), 245-251 (TDIAGTT), 270-273 (DTAG), 335-338 (NKAD), and 358-360 (SAR) contribute to the GTP site. S230 lines the Mg(2+) pocket. Residues T245, I247, and T250 each contribute to the K(+) site. T251 contributes to the Mg(2+) binding site. K454 serves as a coordination point for (6S)-5-formyl-5,6,7,8-tetrahydrofolate.

It belongs to the TRAFAC class TrmE-Era-EngA-EngB-Septin-like GTPase superfamily. TrmE GTPase family. As to quaternary structure, homodimer. Heterotetramer of two MnmE and two MnmG subunits. K(+) serves as cofactor.

It is found in the cytoplasm. Its function is as follows. Exhibits a very high intrinsic GTPase hydrolysis rate. Involved in the addition of a carboxymethylaminomethyl (cmnm) group at the wobble position (U34) of certain tRNAs, forming tRNA-cmnm(5)s(2)U34. The protein is tRNA modification GTPase MnmE of Pectobacterium carotovorum subsp. carotovorum (strain PC1).